A 348-amino-acid polypeptide reads, in one-letter code: MNDRQAALDQALKQIEKQFGKGSIMKLGEHSDQNISTISSGSLALDIALGVGGYPRGRIIEVYGPESSGKTTVALHAIAEVQAQGGTAAFIDAEHALDPAYAKNLGVNIDELLLSQPDTGEQALEIAEALVRSGAVDMLVIDSVAALVPRAEIEGEMGDAHVGLQARLMSQALRKLSGAINKSKTIAIFINQIREKVGVMFGNPEITPGGRALKFYSTVRLEVRRAEQLKQGTDVMGNKTKIKVVKNKVAPPFRIAEVDIMYGEGISREGELVDMAAEVDVINKSGSWYSYKEERIGQGRENAKQYLKEHTDIRDEISQRVREEYEIDGANKEPLEETEETLSLLDDE.

64-71 (GPESSGKT) contacts ATP. The segment covering 325-335 (YEIDGANKEPL) has biased composition (basic and acidic residues). Residues 325–348 (YEIDGANKEPLEETEETLSLLDDE) are disordered. Residues 336-348 (EETEETLSLLDDE) are compositionally biased toward acidic residues.

The protein belongs to the RecA family.

The protein localises to the cytoplasm. In terms of biological role, can catalyze the hydrolysis of ATP in the presence of single-stranded DNA, the ATP-dependent uptake of single-stranded DNA by duplex DNA, and the ATP-dependent hybridization of homologous single-stranded DNAs. It interacts with LexA causing its activation and leading to its autocatalytic cleavage. The protein is Protein RecA of Listeria welshimeri serovar 6b (strain ATCC 35897 / DSM 20650 / CCUG 15529 / CIP 8149 / NCTC 11857 / SLCC 5334 / V8).